The primary structure comprises 330 residues: uncharacterized protein (330 aa).

125–132 (GPPGCGKT) provides a ligand contact to ATP.

The protein belongs to the AAA ATPase family.

This is an uncharacterized protein from Sinorhizobium fredii (strain NBRC 101917 / NGR234).